Here is a 213-residue protein sequence, read N- to C-terminus: Cytochrome c biogenesis ATP-binding export protein CcmA (213 aa).

Positions 11–213 (LTARNLECIR…TVTVHHLVLS (203 aa)) constitute an ABC transporter domain. 43 to 50 (GPNGSGKT) contacts ATP.

Belongs to the ABC transporter superfamily. CcmA exporter (TC 3.A.1.107) family. The complex is composed of two ATP-binding proteins (CcmA) and two transmembrane proteins (CcmB).

It localises to the cell inner membrane. It catalyses the reaction heme b(in) + ATP + H2O = heme b(out) + ADP + phosphate + H(+). In terms of biological role, part of the ABC transporter complex CcmAB involved in the biogenesis of c-type cytochromes; once thought to export heme, this seems not to be the case, but its exact role is uncertain. Responsible for energy coupling to the transport system. In Nitrosomonas europaea (strain ATCC 19718 / CIP 103999 / KCTC 2705 / NBRC 14298), this protein is Cytochrome c biogenesis ATP-binding export protein CcmA.